Here is a 468-residue protein sequence, read N- to C-terminus: E3 ubiquitin-protein ligase RGLG2 (468 aa).

Residues 1 to 89 form a disordered region; it reads MGTGNSKENW…PSQSYGSDNK (89 aa). Glycine 2 carries the N-myristoyl glycine lipid modification. Over residues 12 to 45 the composition is skewed to low complexity; sequence QSSFRSTSASSASPSSSSWASQQSYPQYGAESYN. Residues 46-65 show a composition bias toward pro residues; sequence YPPPPSYAQPPEYTQPPPPL. Over residues 66 to 84 the composition is skewed to low complexity; sequence YSTQPYSAPSYSAPPSQSY. The VWFA domain maps to 122 to 342; sequence NLIVGIDFTK…KETEFALSAL (221 aa). A disordered region spans residues 369–416; that stretch reads FPLPPPMRGGSSSYNSPKPSRLPSFKPSVPPHPTEGYHVRSSPVPPPT. The segment at 425-458 adopts an RING-type zinc-finger fold; that stretch reads CPICLSNPKDMAFGCGHQTCCECGPDLQMCPICR.

In terms of assembly, interacts with the heterodimer UBC35/UEV1B, UBC35 alone, PIN1, but not with UCB2, UCB9, UEV1B or UEV1C alone. Interacts with ERF053. In terms of processing, N-myristoylated. Ubiquitously expressed.

The protein resides in the cell membrane. It is found in the nucleus. It carries out the reaction S-ubiquitinyl-[E2 ubiquitin-conjugating enzyme]-L-cysteine + [acceptor protein]-L-lysine = [E2 ubiquitin-conjugating enzyme]-L-cysteine + N(6)-ubiquitinyl-[acceptor protein]-L-lysine.. In terms of biological role, E3 ubiquitin-protein ligase that mediates the formation of 'Lys-63'-linked ubiquitin chains. Regulates apical dominance by acting on the auxin transport proteins abundance. Mediates ubiquitination and subsequent proteasomal degradation of ERF053 in response to drought stress. Acts as a negative regulator of drought stress response. The protein is E3 ubiquitin-protein ligase RGLG2 of Arabidopsis thaliana (Mouse-ear cress).